Consider the following 857-residue polypeptide: Gelation factor (857 aa).

Met-1 carries the blocked amino end (Met) modification. Positions 1–250 (MAAAPSGKTW…EKKRRETSDA (250 aa)) are actin-binding. Calponin-homology (CH) domains are found at residues 12-117 (DVQK…LRYQ) and 125-227 (NSPK…DYAL). The interval 229–246 (KEKRDADALAALEKKRRE) is regulatory site. 6 Filamin repeats span residues 245–346 (RETS…NVKI), 347–446 (DGSD…EVKI), 447–545 (LNSD…SIHI), 546–645 (KPAA…TVTV), 646–747 (KPAP…DVKC), and 763–837 (FTVA…KQVL). The segment at 832-857 (PFKQVLGNPGKKNPEVKSFTTTRTAN) is disordered.

In terms of assembly, homodimer.

F-actin cross-linking protein. In Dictyostelium discoideum (Social amoeba), this protein is Gelation factor (abpC).